Consider the following 93-residue polypeptide: MDGIKYVVVTDKSIRLLVKNQYTSNVESGSTRTEIKHWVELFFGVKVIAMNSHRLPGKGRRMGPIMGHTMHYRRMIITLQPGYSIPPLRTKRT.

It belongs to the universal ribosomal protein uL23 family. In terms of assembly, part of the 50S ribosomal subunit.

The protein resides in the plastid. It is found in the chloroplast. Functionally, binds to 23S rRNA. The chain is Large ribosomal subunit protein uL23cz/uL23cy (rpl23-A) from Gossypium barbadense (Sea Island cotton).